A 467-amino-acid chain; its full sequence is MAFLIHLLVCTFGMGSWVAINGLWVELPLLVTELPEGWYLPSYLTVIIQLANVGPLLVTLLHHFRPGCLSEVAVVFTVLGVGTIACTLFAFLWNVTSWVLGSRHSIAFLVLTFFLALVDCTSSVTFLPFMSRLPTYYLTTFFVGEGLSGLLPALVALAQGSGLTTCVNVTEISATTLSPETTRNMDSPQGASSTLVSKLAGTAPSGIHLESRYLPANFSPLVFFLLLSFMMACCFISFFFLQRQPKRWEASIEDLLTSQVTLNSIRPQEGKDLGPPEESGKAQDPPEEKTAPQHLAHLTFIYVLVAFVNALTNGVLPSVQTYSCLSYGPVAYHLSATLSSMASPLTCFLSIFLPNRSLPFLGVLAVLGTSFGAYNMAMAVMSPCPFMQGHWGGEVLIVVSWVLFTGCLSYVKVMLGVILRDHSRSALLWCGAAVQLGSLLGAVVMFPLVNVLRLFSSADFCSLQCSA.

At 1–2 (MA) the chain is on the cytoplasmic side. Residues 3–23 (FLIHLLVCTFGMGSWVAINGL) traverse the membrane as a helical segment. Over 24-43 (WVELPLLVTELPEGWYLPSY) the chain is Extracellular. A helical membrane pass occupies residues 44 to 64 (LTVIIQLANVGPLLVTLLHHF). The Cytoplasmic segment spans residues 65 to 71 (RPGCLSE). A helical transmembrane segment spans residues 72-92 (VAVVFTVLGVGTIACTLFAFL). The Extracellular portion of the chain corresponds to 93–105 (WNVTSWVLGSRHS). The N-linked (GlcNAc...) asparagine glycan is linked to N94. The chain crosses the membrane as a helical span at residues 106–126 (IAFLVLTFFLALVDCTSSVTF). Residues 127 to 137 (LPFMSRLPTYY) are Cytoplasmic-facing. Residues 138-158 (LTTFFVGEGLSGLLPALVALA) form a helical membrane-spanning segment. Over 159 to 220 (QGSGLTTCVN…SRYLPANFSP (62 aa)) the chain is Extracellular. An N-linked (GlcNAc...) asparagine glycan is attached at N168. The chain crosses the membrane as a helical span at residues 221–241 (LVFFLLLSFMMACCFISFFFL). Over 242–294 (QRQPKRWEASIEDLLTSQVTLNSIRPQEGKDLGPPEESGKAQDPPEEKTAPQH) the chain is Cytoplasmic. S251 carries the phosphoserine modification. The interval 266 to 288 (RPQEGKDLGPPEESGKAQDPPEE) is disordered. The span at 268–288 (QEGKDLGPPEESGKAQDPPEE) shows a compositional bias: basic and acidic residues. A helical transmembrane segment spans residues 295-315 (LAHLTFIYVLVAFVNALTNGV). At 316 to 333 (LPSVQTYSCLSYGPVAYH) the chain is on the extracellular side. The helical transmembrane segment at 334-354 (LSATLSSMASPLTCFLSIFLP) threads the bilayer. At 355–359 (NRSLP) the chain is on the cytoplasmic side. Residues 360-380 (FLGVLAVLGTSFGAYNMAMAV) form a helical membrane-spanning segment. Residues 381 to 394 (MSPCPFMQGHWGGE) lie on the Extracellular side of the membrane. A helical transmembrane segment spans residues 395-415 (VLIVVSWVLFTGCLSYVKVML). Residues 416-425 (GVILRDHSRS) lie on the Cytoplasmic side of the membrane. The helical transmembrane segment at 426-446 (ALLWCGAAVQLGSLLGAVVMF) threads the bilayer. Topologically, residues 447 to 467 (PLVNVLRLFSSADFCSLQCSA) are extracellular.

It belongs to the riboflavin transporter family.

It is found in the cell membrane. The catalysed reaction is riboflavin(in) = riboflavin(out). Functionally, plasma membrane transporter mediating the uptake by cells of the water soluble vitamin B2/riboflavin that plays a key role in biochemical oxidation-reduction reactions of the carbohydrate, lipid, and amino acid metabolism. This is Solute carrier family 52, riboflavin transporter, member 3 (SLC52A3) from Bos taurus (Bovine).